Here is a 452-residue protein sequence, read N- to C-terminus: Phosphoglucosamine mutase (452 aa).

Ser-103 (phosphoserine intermediate) is an active-site residue. Positions 103, 243, 245, and 247 each coordinate Mg(2+). Ser-103 bears the Phosphoserine mark.

Belongs to the phosphohexose mutase family. Requires Mg(2+) as cofactor. Activated by phosphorylation.

The enzyme catalyses alpha-D-glucosamine 1-phosphate = D-glucosamine 6-phosphate. In terms of biological role, catalyzes the conversion of glucosamine-6-phosphate to glucosamine-1-phosphate. The polypeptide is Phosphoglucosamine mutase (Exiguobacterium sp. (strain ATCC BAA-1283 / AT1b)).